The primary structure comprises 152 residues: Deoxyuridine 5'-triphosphate nucleotidohydrolase (152 aa).

Residues 71–73, Asn84, 88–90, and Met98 contribute to the substrate site; these read RSG and LID.

Belongs to the dUTPase family. Homotrimer. Mg(2+) is required as a cofactor.

The enzyme catalyses dUTP + H2O = dUMP + diphosphate + H(+). It participates in pyrimidine metabolism; dUMP biosynthesis; dUMP from dCTP (dUTP route): step 2/2. Its function is as follows. This enzyme is involved in nucleotide metabolism: it produces dUMP, the immediate precursor of thymidine nucleotides and it decreases the intracellular concentration of dUTP so that uracil cannot be incorporated into DNA. This chain is Deoxyuridine 5'-triphosphate nucleotidohydrolase, found in Escherichia coli O1:K1 / APEC.